We begin with the raw amino-acid sequence, 172 residues long: Peptide deformylase (172 aa).

Residues Cys94 and His136 each coordinate Fe cation. Residue Glu137 is part of the active site. Residue His140 coordinates Fe cation.

This sequence belongs to the polypeptide deformylase family. Fe(2+) serves as cofactor.

It carries out the reaction N-terminal N-formyl-L-methionyl-[peptide] + H2O = N-terminal L-methionyl-[peptide] + formate. Removes the formyl group from the N-terminal Met of newly synthesized proteins. Requires at least a dipeptide for an efficient rate of reaction. N-terminal L-methionine is a prerequisite for activity but the enzyme has broad specificity at other positions. The polypeptide is Peptide deformylase (Pelagibacter ubique (strain HTCC1062)).